The chain runs to 434 residues: Nicotinate phosphoribosyltransferase (434 aa).

Histidine 242 bears the Phosphohistidine; by autocatalysis mark.

It belongs to the NAPRTase family. In terms of processing, transiently phosphorylated on a His residue during the reaction cycle. Phosphorylation strongly increases the affinity for substrates and increases the rate of nicotinate D-ribonucleotide production. Dephosphorylation regenerates the low-affinity form of the enzyme, leading to product release.

It catalyses the reaction nicotinate + 5-phospho-alpha-D-ribose 1-diphosphate + ATP + H2O = nicotinate beta-D-ribonucleotide + ADP + phosphate + diphosphate. The protein operates within cofactor biosynthesis; NAD(+) biosynthesis; nicotinate D-ribonucleotide from nicotinate: step 1/1. Catalyzes the synthesis of beta-nicotinate D-ribonucleotide from nicotinate and 5-phospho-D-ribose 1-phosphate at the expense of ATP. The sequence is that of Nicotinate phosphoribosyltransferase from Bartonella tribocorum (strain CIP 105476 / IBS 506).